Consider the following 356-residue polypeptide: RuBisCO accumulation factor 1 (356 aa).

An N-terminal alpha-helix region spans residues 7-185 (ALTTEVLQRL…RQALEKLLTD (179 aa)). Positions 209 to 342 (PYLVPVAGTA…LLLVLRPPQV (134 aa)) are C-terminal beta-sheet.

Belongs to the RAF family. As to quaternary structure, homodimer. Forms an RbcL(8)-Raf1(8) complex. Forms complexes of many stoichiometries with RbcL with and without RbcS. RbcX and Raf1 can bind simultaneously to RbcL.

The protein localises to the cytoplasm. A major RuBisCO chaperone. Acts after GroEL-GroES chaperonin to fold and/or assemble the large subunit of RuBisCO (ccbL, rbcL). Cooperates with RbcX in RbcL folding, plays the major role in assembly of dimers into RbcL(8)-Raf1(8) intermediate complexes. RbcS replaces Raf1, leading to holoenzyme formation. Functionally, required for optimal reconstitution of RuBisCO upon expression of rbcL-rbcS subunits in E.coli. Only interacts with the large subunit (cbbL, rbcL). Probably acts in the final stages of RuBisCO assembly, possibly participating in the addition of the small subunit (ccbS, rbcS). This chain is RuBisCO accumulation factor 1, found in Thermosynechococcus vestitus (strain NIES-2133 / IAM M-273 / BP-1).